The primary structure comprises 543 residues: Probable protein kinase UbiB (543 aa).

Residues 123–501 (DFDSQALASA…GSRQGRARYL (379 aa)) enclose the Protein kinase domain. ATP contacts are provided by residues 129-137 (LASASIAQV) and Lys-152. Asp-287 serves as the catalytic Proton acceptor. The helical transmembrane segment at 517–537 (MVNIALWPIGLYVAGGVIWLA) threads the bilayer.

It belongs to the ABC1 family. UbiB subfamily.

It localises to the cell inner membrane. It functions in the pathway cofactor biosynthesis; ubiquinone biosynthesis [regulation]. Its function is as follows. Is probably a protein kinase regulator of UbiI activity which is involved in aerobic coenzyme Q (ubiquinone) biosynthesis. The sequence is that of Probable protein kinase UbiB from Edwardsiella ictaluri (strain 93-146).